Reading from the N-terminus, the 502-residue chain is Probable cytosol aminopeptidase (502 aa).

Mn(2+)-binding residues include Lys269 and Asp274. Lys281 is a catalytic residue. The Mn(2+) site is built by Asp292, Asp351, and Glu353. Residue Arg355 is part of the active site.

It belongs to the peptidase M17 family. It depends on Mn(2+) as a cofactor.

The protein localises to the cytoplasm. The enzyme catalyses Release of an N-terminal amino acid, Xaa-|-Yaa-, in which Xaa is preferably Leu, but may be other amino acids including Pro although not Arg or Lys, and Yaa may be Pro. Amino acid amides and methyl esters are also readily hydrolyzed, but rates on arylamides are exceedingly low.. It catalyses the reaction Release of an N-terminal amino acid, preferentially leucine, but not glutamic or aspartic acids.. In terms of biological role, presumably involved in the processing and regular turnover of intracellular proteins. Catalyzes the removal of unsubstituted N-terminal amino acids from various peptides. This Shewanella loihica (strain ATCC BAA-1088 / PV-4) protein is Probable cytosol aminopeptidase.